The sequence spans 394 residues: Elongation factor Tu 1 (394 aa).

Residues 10–204 (KPHVNVGTIG…ALDNYIPEPE (195 aa)) enclose the tr-type G domain. Residues 19 to 26 (GHVDHGKT) form a G1 region. 19 to 26 (GHVDHGKT) lines the GTP pocket. Position 26 (T26) interacts with Mg(2+). Residues 60–64 (GITIS) form a G2 region. The tract at residues 81–84 (DCPG) is G3. Residues 81–85 (DCPGH) and 136–139 (NKCD) each bind GTP. The G4 stretch occupies residues 136–139 (NKCD). A G5 region spans residues 174-176 (SAL).

The protein belongs to the TRAFAC class translation factor GTPase superfamily. Classic translation factor GTPase family. EF-Tu/EF-1A subfamily. As to quaternary structure, monomer.

The protein resides in the cytoplasm. It carries out the reaction GTP + H2O = GDP + phosphate + H(+). Its function is as follows. GTP hydrolase that promotes the GTP-dependent binding of aminoacyl-tRNA to the A-site of ribosomes during protein biosynthesis. In Photobacterium profundum (strain SS9), this protein is Elongation factor Tu 1.